The sequence spans 317 residues: Nicotianamine synthase (317 aa).

Belongs to the nicotianamine synthase (NAS)-like family. In terms of assembly, homomultimer. As to expression, leaves and roots.

It carries out the reaction 3 S-adenosyl-L-methionine = nicotianamine + 3 S-methyl-5'-thioadenosine + 3 H(+). Its function is as follows. Synthesizes nicotianamine, a polyamine that serves as a sensor for the physiological iron status within the plant, and/or might be involved in the transport of iron. This is Nicotianamine synthase (CHLN) from Solanum lycopersicum (Tomato).